A 318-amino-acid polypeptide reads, in one-letter code: Ribosomal RNA small subunit methyltransferase H (318 aa).

Residues 37–39, Asp-57, Phe-83, Asp-104, and Gln-111 each bind S-adenosyl-L-methionine; that span reads GGH.

It belongs to the methyltransferase superfamily. RsmH family.

It localises to the cytoplasm. The enzyme catalyses cytidine(1402) in 16S rRNA + S-adenosyl-L-methionine = N(4)-methylcytidine(1402) in 16S rRNA + S-adenosyl-L-homocysteine + H(+). Specifically methylates the N4 position of cytidine in position 1402 (C1402) of 16S rRNA. The protein is Ribosomal RNA small subunit methyltransferase H of Neisseria gonorrhoeae (strain ATCC 700825 / FA 1090).